Here is a 382-residue protein sequence, read N- to C-terminus: uncharacterized protein (382 aa).

11 consecutive transmembrane segments (helical) span residues 8–28, 41–61, 73–93, 94–114, 133–153, 157–177, 208–228, 235–255, 274–294, 325–345, and 349–369; these read VLLL…LNTL, WQVG…TLIA, SYHC…LTVD, FWSW…IWVI, AAYM…LGIV, LLSV…PLLF, GCII…LYLS, ASVG…QWPM, VVIL…ALFI, ALLM…SLLM, and SDNL…MMLL.

The protein belongs to the major facilitator superfamily. YcaD (TC 2.A.1.26) family.

It localises to the cell inner membrane. This is an uncharacterized protein from Yersinia pseudotuberculosis serotype IB (strain PB1/+).